The chain runs to 309 residues: Putative ankyrin repeat protein R603 (309 aa).

ANK repeat units follow at residues 53 to 82, 83 to 112, 114 to 144, 145 to 176, 177 to 206, 214 to 243, and 245 to 274; these read QVNG…MNPE, NKSQ…DVSL, DHFA…DVTS, NNNL…DIHA, DEYF…DVNM, NVLS…DISF, and DDND…DISF.

In Acanthamoeba polyphaga (Amoeba), this protein is Putative ankyrin repeat protein R603.